A 312-amino-acid chain; its full sequence is Malate dehydrogenase (312 aa).

Residues 7-13 and aspartate 34 contribute to the NAD(+) site; that span reads GAAGGIG. The substrate site is built by arginine 81 and arginine 87. NAD(+) contacts are provided by residues asparagine 94 and 117 to 119; that span reads ITN. Substrate is bound by residues asparagine 119 and arginine 153. Histidine 177 (proton acceptor) is an active-site residue. Methionine 227 is an NAD(+) binding site.

Belongs to the LDH/MDH superfamily. MDH type 1 family. Homodimer.

It catalyses the reaction (S)-malate + NAD(+) = oxaloacetate + NADH + H(+). In terms of biological role, catalyzes the reversible oxidation of malate to oxaloacetate. This chain is Malate dehydrogenase, found in Escherichia coli (strain ATCC 8739 / DSM 1576 / NBRC 3972 / NCIMB 8545 / WDCM 00012 / Crooks).